The sequence spans 754 residues: Putative sulfate transporter YPR003C (754 aa).

Positions M1 to S91 are disordered. Topologically, residues M1 to K118 are cytoplasmic. A compositionally biased stretch (basic and acidic residues) spans R25–N45. Over residues N65 to N89 the composition is skewed to low complexity. Residues L119–S139 form a helical membrane-spanning segment. The Lumenal segment spans residues Y140–H146. Residues V147 to G167 traverse the membrane as a helical segment. The Cytoplasmic segment spans residues S168–M172. A helical transmembrane segment spans residues I173–L193. Over H194–S199 the chain is Lumenal. A helical transmembrane segment spans residues L200–I220. Topologically, residues S221 to K232 are cytoplasmic. Residues A233–S253 traverse the membrane as a helical segment. Over E254–A282 the chain is Lumenal. A helical membrane pass occupies residues P283–L303. At T304 to S317 the chain is on the cytoplasmic side. Residues A318 to F338 form a helical membrane-spanning segment. The Lumenal portion of the chain corresponds to N339–K370. Residues L371–T391 form a helical membrane-spanning segment. The Cytoplasmic segment spans residues T392–E410. Residues L411 to G431 traverse the membrane as a helical segment. Topologically, residues G432–G450 are lumenal. Residues V451–I471 traverse the membrane as a helical segment. At P472 to C474 the chain is on the cytoplasmic side. The helical transmembrane segment at V475–I495 threads the bilayer. Residues K496 to T517 are Lumenal-facing. The chain crosses the membrane as a helical span at residues I518–I538. Over K539–V754 the chain is Cytoplasmic. An STAS domain is found at D574–I725.

This sequence belongs to the SLC26A/SulP transporter (TC 2.A.53) family.

Its subcellular location is the endoplasmic reticulum membrane. In terms of biological role, possible sulfate transporter. This Saccharomyces cerevisiae (strain ATCC 204508 / S288c) (Baker's yeast) protein is Putative sulfate transporter YPR003C.